A 308-amino-acid chain; its full sequence is Limonin dehydrogenase (308 aa).

The protein belongs to the aldehyde dehydrogenase family.

It is found in the periplasm. Its activity is regulated as follows. Completely inhibited by HgCl(2), CoCl(2) and CaCl(2). Catalyzes the NAD(+)-dependent conversion of limonin. This is Limonin dehydrogenase from Pseudomonas putida (Arthrobacter siderocapsulatus).